We begin with the raw amino-acid sequence, 321 residues long: ATP-dependent 6-phosphofructokinase (321 aa).

An ATP-binding site is contributed by glycine 12. ADP contacts are provided by residues 22 to 26 and 55 to 60; these read RGVVR and RYSVSD. ATP contacts are provided by residues 73-74 and 103-106; these read RF and GDGS. Aspartate 104 lines the Mg(2+) pocket. 127–129 contacts substrate; that stretch reads TID. The active-site Proton acceptor is aspartate 129. Residue arginine 156 coordinates ADP. Substrate-binding positions include arginine 164 and 171 to 173; that span reads MGR. Residues 187–189, arginine 213, and 215–217 contribute to the ADP site; these read GCE and KRH. Substrate-binding positions include glutamate 224, arginine 245, and 251–254; that span reads HIQR.

It belongs to the phosphofructokinase type A (PFKA) family. ATP-dependent PFK group I subfamily. Prokaryotic clade 'B1' sub-subfamily. In terms of assembly, homotetramer. The cofactor is Mg(2+).

Its subcellular location is the cytoplasm. The catalysed reaction is beta-D-fructose 6-phosphate + ATP = beta-D-fructose 1,6-bisphosphate + ADP + H(+). It participates in carbohydrate degradation; glycolysis; D-glyceraldehyde 3-phosphate and glycerone phosphate from D-glucose: step 3/4. With respect to regulation, allosterically activated by ADP and other diphosphonucleosides, and allosterically inhibited by phosphoenolpyruvate. Its function is as follows. Catalyzes the phosphorylation of D-fructose 6-phosphate to fructose 1,6-bisphosphate by ATP, the first committing step of glycolysis. This chain is ATP-dependent 6-phosphofructokinase, found in Haemophilus influenzae (strain 86-028NP).